The following is a 469-amino-acid chain: Adenosylhomocysteinase (469 aa).

The substrate site is built by Thr63, Asp139, and Glu164. Position 165–167 (165–167) interacts with NAD(+); it reads TTT. Residues Lys194 and Asp198 each coordinate substrate. NAD(+)-binding positions include Asn199, 228–233, Glu251, Asn300, 321–323, and Asn375; these read GYGDVG and IGH.

This sequence belongs to the adenosylhomocysteinase family. NAD(+) serves as cofactor.

The protein resides in the cytoplasm. It catalyses the reaction S-adenosyl-L-homocysteine + H2O = L-homocysteine + adenosine. The protein operates within amino-acid biosynthesis; L-homocysteine biosynthesis; L-homocysteine from S-adenosyl-L-homocysteine: step 1/1. Functionally, may play a key role in the regulation of the intracellular concentration of adenosylhomocysteine. In Pseudomonas syringae pv. syringae (strain B728a), this protein is Adenosylhomocysteinase.